Here is a 235-residue protein sequence, read N- to C-terminus: Phosphoribosylformylglycinamidine synthase subunit PurQ (235 aa).

A Glutamine amidotransferase type-1 domain is found at 3 to 234 (FGVLVFPGSN…LNSLMAQGVT (232 aa)). The active-site Nucleophile is cysteine 86. Residues histidine 203 and glutamate 205 contribute to the active site.

In terms of assembly, part of the FGAM synthase complex composed of 1 PurL, 1 PurQ and 2 PurS subunits.

It is found in the cytoplasm. The catalysed reaction is N(2)-formyl-N(1)-(5-phospho-beta-D-ribosyl)glycinamide + L-glutamine + ATP + H2O = 2-formamido-N(1)-(5-O-phospho-beta-D-ribosyl)acetamidine + L-glutamate + ADP + phosphate + H(+). It carries out the reaction L-glutamine + H2O = L-glutamate + NH4(+). It participates in purine metabolism; IMP biosynthesis via de novo pathway; 5-amino-1-(5-phospho-D-ribosyl)imidazole from N(2)-formyl-N(1)-(5-phospho-D-ribosyl)glycinamide: step 1/2. Functionally, part of the phosphoribosylformylglycinamidine synthase complex involved in the purines biosynthetic pathway. Catalyzes the ATP-dependent conversion of formylglycinamide ribonucleotide (FGAR) and glutamine to yield formylglycinamidine ribonucleotide (FGAM) and glutamate. The FGAM synthase complex is composed of three subunits. PurQ produces an ammonia molecule by converting glutamine to glutamate. PurL transfers the ammonia molecule to FGAR to form FGAM in an ATP-dependent manner. PurS interacts with PurQ and PurL and is thought to assist in the transfer of the ammonia molecule from PurQ to PurL. The chain is Phosphoribosylformylglycinamidine synthase subunit PurQ from Acaryochloris marina (strain MBIC 11017).